Here is a 294-residue protein sequence, read N- to C-terminus: ATP synthase gamma chain (294 aa).

This sequence belongs to the ATPase gamma chain family. In terms of assembly, F-type ATPases have 2 components, CF(1) - the catalytic core - and CF(0) - the membrane proton channel. CF(1) has five subunits: alpha(3), beta(3), gamma(1), delta(1), epsilon(1). CF(0) has three main subunits: a, b and c.

It localises to the cell inner membrane. Its function is as follows. Produces ATP from ADP in the presence of a proton gradient across the membrane. The gamma chain is believed to be important in regulating ATPase activity and the flow of protons through the CF(0) complex. This chain is ATP synthase gamma chain, found in Parvibaculum lavamentivorans (strain DS-1 / DSM 13023 / NCIMB 13966).